Consider the following 361-residue polypeptide: Phospho-N-acetylmuramoyl-pentapeptide-transferase (361 aa).

The next 10 membrane-spanning stretches (helical) occupy residues 28–48, 74–94, 99–119, 133–153, 168–188, 203–223, 236–256, 263–283, 288–308, and 338–358; these read LAIIITLSLSFITGPILIEFL, TMGGIMIILSSCLSTLLLADL, IWITLFGFISFGIIGFMDDYA, SKLLLQGIISVIICVLLEYLD, LSLDLGYCYIVFAIFVIVGSS, VPIAFTAGSFALISYLVGNLI, TGELTVLCAGLVGSCLGFLWF, VFMGDTGSLSLGGVLGIISVI, IVLAIVGGLFVIETASVILQV, and KVVIRFWIISVIFALIGLSSL.

This sequence belongs to the glycosyltransferase 4 family. MraY subfamily. Mg(2+) serves as cofactor.

Its subcellular location is the cell membrane. The enzyme catalyses UDP-N-acetyl-alpha-D-muramoyl-L-alanyl-gamma-D-glutamyl-meso-2,6-diaminopimeloyl-D-alanyl-D-alanine + di-trans,octa-cis-undecaprenyl phosphate = di-trans,octa-cis-undecaprenyl diphospho-N-acetyl-alpha-D-muramoyl-L-alanyl-D-glutamyl-meso-2,6-diaminopimeloyl-D-alanyl-D-alanine + UMP. It participates in cell wall biogenesis; peptidoglycan biosynthesis. Functionally, catalyzes the initial step of the lipid cycle reactions in the biosynthesis of the cell wall peptidoglycan: transfers peptidoglycan precursor phospho-MurNAc-pentapeptide from UDP-MurNAc-pentapeptide onto the lipid carrier undecaprenyl phosphate, yielding undecaprenyl-pyrophosphoryl-MurNAc-pentapeptide, known as lipid I. The polypeptide is Phospho-N-acetylmuramoyl-pentapeptide-transferase (Rickettsia rickettsii).